We begin with the raw amino-acid sequence, 204 residues long: Large ribosomal subunit protein eL15 (204 aa).

This sequence belongs to the eukaryotic ribosomal protein eL15 family. In terms of assembly, component of the large ribosomal subunit.

It is found in the cytoplasm. Its function is as follows. Component of the large ribosomal subunit. The ribosome is a large ribonucleoprotein complex responsible for the synthesis of proteins in the cell. In Hypophthalmichthys molitrix (Silver carp), this protein is Large ribosomal subunit protein eL15 (rpl15).